The primary structure comprises 89 residues: Probable Fe(2+)-trafficking protein (89 aa).

The protein belongs to the Fe(2+)-trafficking protein family.

Could be a mediator in iron transactions between iron acquisition and iron-requiring processes, such as synthesis and/or repair of Fe-S clusters in biosynthetic enzymes. This Stenotrophomonas maltophilia (strain K279a) protein is Probable Fe(2+)-trafficking protein.